The following is a 658-amino-acid chain: Putative endo-beta-N-acetylglucosaminidase (658 aa).

Residues 1-23 (MKKVRFIFLALLFFLASPEGAMA) form the signal peptide. Cell wall-binding repeat units lie at residues 42 to 63 (ANEWVFDTHYQSWFYIKADANY), 65 to 84 (ENEWLKQGDDYFYLKSGGYM), 86 to 105 (KSEWVEDKGAFYYLDQDGKM), 124 to 145 (IEDWVYDSQYDAWFYIKADGQH), 147 to 166 (EKEWLQIKGKDYYFKSGGYL), 185 to 206 (QQGWLFDKQYQSWFYIKENGNY), 208 to 227 (DKEWIFENGHYYYLKSGGYM), 229 to 248 (ANEWIWDKESWFYLKFDGKM), 250 to 271 (EKEWVYDSHSQAWYYFKSGGYM), 273 to 292 (ANEWIWDKESWFYLKSDGKI), 294 to 315 (EKEWVYDSHSQAWYYFKSGGYM), 317 to 336 (ANEWIWDKESWFYLKSDGKI), and 338 to 359 (EKEWVYDSHSQAWYYFKSGGYM).

This sequence belongs to the glycosyl hydrolase 73 family.

The protein localises to the secreted. The enzyme catalyses an N(4)-(oligosaccharide-(1-&gt;3)-[oligosaccharide-(1-&gt;6)]-beta-D-Man-(1-&gt;4)-beta-D-GlcNAc-(1-&gt;4)-alpha-D-GlcNAc)-L-asparaginyl-[protein] + H2O = an oligosaccharide-(1-&gt;3)-[oligosaccharide-(1-&gt;6)]-beta-D-Man-(1-&gt;4)-D-GlcNAc + N(4)-(N-acetyl-beta-D-glucosaminyl)-L-asparaginyl-[protein]. Its function is as follows. Plays an important role in cell wall degradation and cell separation. The protein is Putative endo-beta-N-acetylglucosaminidase (lytB) of Streptococcus pneumoniae serotype 4 (strain ATCC BAA-334 / TIGR4).